The primary structure comprises 385 residues: ATP phosphoribosyltransferase regulatory subunit (385 aa).

Belongs to the class-II aminoacyl-tRNA synthetase family. HisZ subfamily. Heteromultimer composed of HisG and HisZ subunits.

The protein resides in the cytoplasm. It functions in the pathway amino-acid biosynthesis; L-histidine biosynthesis; L-histidine from 5-phospho-alpha-D-ribose 1-diphosphate: step 1/9. In terms of biological role, required for the first step of histidine biosynthesis. May allow the feedback regulation of ATP phosphoribosyltransferase activity by histidine. The chain is ATP phosphoribosyltransferase regulatory subunit from Bordetella avium (strain 197N).